The chain runs to 87 residues: Large ribosomal subunit protein bL27 (87 aa).

Positions 1 to 21 are disordered; that stretch reads MAHKKGQGSTQNNRDSAGRRL.

The protein belongs to the bacterial ribosomal protein bL27 family.

The chain is Large ribosomal subunit protein bL27 from Nautilia profundicola (strain ATCC BAA-1463 / DSM 18972 / AmH).